A 145-amino-acid polypeptide reads, in one-letter code: MTKSYRQGQILKLIRGKRIGTQDELAQELKSQGIAATQVTLSRDIRDLRLVKTREGYKEMAEEEQGPQFSLLAGEFLRDVLRAQNLVVLKTSPGHANSVAVALDNEEWPEVVGTIAGDDTILVIAPDTPTAEAVQEKLLGLLEHQ.

Belongs to the ArgR family.

It is found in the cytoplasm. It functions in the pathway amino-acid biosynthesis; L-arginine biosynthesis [regulation]. Its function is as follows. Regulates arginine biosynthesis genes. This Solibacter usitatus (strain Ellin6076) protein is Arginine repressor.